A 287-amino-acid polypeptide reads, in one-letter code: ADP-dependent (S)-NAD(P)H-hydrate dehydratase (287 aa).

One can recognise a YjeF C-terminal domain in the interval 7 to 283; it reads GEDDVRKFVP…ELLPSVMKPF (277 aa). Residues A42 and H159 each contribute to the (6S)-NADPHX site. AMP is bound by residues 196–200 and G224; that span reads KGPTD. D225 contributes to the (6S)-NADPHX binding site.

This sequence belongs to the NnrD/CARKD family. In terms of assembly, homotetramer. It depends on Mg(2+) as a cofactor.

It catalyses the reaction (6S)-NADHX + ADP = AMP + phosphate + NADH + H(+). The enzyme catalyses (6S)-NADPHX + ADP = AMP + phosphate + NADPH + H(+). Catalyzes the dehydration of the S-form of NAD(P)HX at the expense of ADP, which is converted to AMP. Together with NAD(P)HX epimerase, which catalyzes the epimerization of the S- and R-forms, the enzyme allows the repair of both epimers of NAD(P)HX, a damaged form of NAD(P)H that is a result of enzymatic or heat-dependent hydration. The sequence is that of ADP-dependent (S)-NAD(P)H-hydrate dehydratase from Cenarchaeum symbiosum (strain A).